The chain runs to 247 residues: Carboxy-S-adenosyl-L-methionine synthase (247 aa).

S-adenosyl-L-methionine is bound by residues Tyr-39, 64–66, 89–90, 117–118, Asn-132, and Arg-199; these read GCS, DN, and DI.

The protein belongs to the class I-like SAM-binding methyltransferase superfamily. Cx-SAM synthase family. Homodimer.

The catalysed reaction is prephenate + S-adenosyl-L-methionine = carboxy-S-adenosyl-L-methionine + 3-phenylpyruvate + H2O. Its function is as follows. Catalyzes the conversion of S-adenosyl-L-methionine (SAM) to carboxy-S-adenosyl-L-methionine (Cx-SAM). This is Carboxy-S-adenosyl-L-methionine synthase from Klebsiella pneumoniae subsp. pneumoniae (strain ATCC 700721 / MGH 78578).